Consider the following 263-residue polypeptide: Linear gramicidin dehydrogenase LgrE (263 aa).

Residue S96 is part of the active site.

The protein belongs to the thioesterase family.

In terms of biological role, in the final step of gramicidin biosynthesis, reduces the pentadecapeptide-aldehyde intermediate, that is released from the terminal module of the non-ribosomal peptide synthetase LgrD, to the final product ethanolamine-containing gramicidin. This Brevibacillus parabrevis protein is Linear gramicidin dehydrogenase LgrE (lgrE).